A 484-amino-acid chain; its full sequence is ATP synthase subunit beta (484 aa).

The disordered stretch occupies residues 104–123 (ERGPIGSKQTMPIHADAPPF). 156–163 (GGAGVGKT) contributes to the ATP binding site.

This sequence belongs to the ATPase alpha/beta chains family. In terms of assembly, F-type ATPases have 2 components, CF(1) - the catalytic core - and CF(0) - the membrane proton channel. CF(1) has five subunits: alpha(3), beta(3), gamma(1), delta(1), epsilon(1). CF(0) has three main subunits: a(1), b(2) and c(9-12). The alpha and beta chains form an alternating ring which encloses part of the gamma chain. CF(1) is attached to CF(0) by a central stalk formed by the gamma and epsilon chains, while a peripheral stalk is formed by the delta and b chains.

It localises to the cell inner membrane. The catalysed reaction is ATP + H2O + 4 H(+)(in) = ADP + phosphate + 5 H(+)(out). Its function is as follows. Produces ATP from ADP in the presence of a proton gradient across the membrane. The catalytic sites are hosted primarily by the beta subunits. This Zymomonas mobilis subsp. mobilis (strain ATCC 31821 / ZM4 / CP4) protein is ATP synthase subunit beta.